Reading from the N-terminus, the 83-residue chain is Acyl carrier protein (83 aa).

In terms of domain architecture, Carrier spans 2 to 77 (STIEEKVKTI…AAIDFISNSH (76 aa)). Residue Ser-37 is modified to O-(pantetheine 4'-phosphoryl)serine.

The protein belongs to the acyl carrier protein (ACP) family. Post-translationally, 4'-phosphopantetheine is transferred from CoA to a specific serine of apo-ACP by AcpS. This modification is essential for activity because fatty acids are bound in thioester linkage to the sulfhydryl of the prosthetic group.

The protein localises to the cytoplasm. It participates in lipid metabolism; fatty acid biosynthesis. Its function is as follows. Carrier of the growing fatty acid chain in fatty acid biosynthesis. The sequence is that of Acyl carrier protein from Blochmanniella pennsylvanica (strain BPEN).